A 459-amino-acid chain; its full sequence is Phosphoglucosamine mutase (459 aa).

Catalysis depends on Ser-102, which acts as the Phosphoserine intermediate. Residues Ser-102, Asp-243, Asp-245, and Asp-247 each contribute to the Mg(2+) site. Phosphoserine is present on Ser-102.

It belongs to the phosphohexose mutase family. The cofactor is Mg(2+). In terms of processing, activated by phosphorylation.

It catalyses the reaction alpha-D-glucosamine 1-phosphate = D-glucosamine 6-phosphate. Its function is as follows. Catalyzes the conversion of glucosamine-6-phosphate to glucosamine-1-phosphate. This chain is Phosphoglucosamine mutase, found in Bartonella quintana (strain Toulouse) (Rochalimaea quintana).